Reading from the N-terminus, the 284-residue chain is 2-dehydro-3-deoxyphosphooctonate aldolase (284 aa).

Belongs to the KdsA family.

It localises to the cytoplasm. The catalysed reaction is D-arabinose 5-phosphate + phosphoenolpyruvate + H2O = 3-deoxy-alpha-D-manno-2-octulosonate-8-phosphate + phosphate. It participates in carbohydrate biosynthesis; 3-deoxy-D-manno-octulosonate biosynthesis; 3-deoxy-D-manno-octulosonate from D-ribulose 5-phosphate: step 2/3. Its pathway is bacterial outer membrane biogenesis; lipopolysaccharide biosynthesis. The polypeptide is 2-dehydro-3-deoxyphosphooctonate aldolase (Klebsiella pneumoniae subsp. pneumoniae (strain ATCC 700721 / MGH 78578)).